The chain runs to 242 residues: Venom nerve growth factor 3 (242 aa).

A signal peptide spans 1–18 (MSMLCYTLIIAFLIGIWA). The propeptide occupies 19 to 125 (APKSEDNVPL…ALNRNIRSKR (107 aa)). Residues 48 to 66 (LKTSRNTDQRHPAPKKAED) are compositionally biased toward basic and acidic residues. Residues 48 to 69 (LKTSRNTDQRHPAPKKAEDQEL) are disordered. 3 cysteine pairs are disulfide-bonded: Cys139–Cys203, Cys181–Cys231, and Cys191–Cys233. N-linked (GlcNAc...) asparagine glycosylation occurs at Asn147.

Belongs to the NGF-beta family. As to quaternary structure, homodimer; non-covalently linked. In terms of tissue distribution, expressed by the venom gland.

The protein resides in the secreted. Functionally, nerve growth factor is important for the development and maintenance of the sympathetic and sensory nervous systems. It stimulates division and differentiation of sympathetic and embryonic sensory neurons as well as basal forebrain cholinergic neurons in the brain. Its relevance in the snake venom is not clear. However, it has been shown to inhibit metalloproteinase-dependent proteolysis of platelet glycoprotein Ib alpha, suggesting a metalloproteinase inhibition to prevent metalloprotease autodigestion and/or protection against prey proteases. Binds a lipid between the two protein chains in the homodimer. The lipid-bound form promotes histamine relase from mouse mast cells, contrary to the lipid-free form. In Demansia vestigiata (Lesser black whip snake), this protein is Venom nerve growth factor 3.